The primary structure comprises 396 residues: Stearoyl-[acyl-carrier-protein] 9-desaturase 2, chloroplastic (396 aa).

The N-terminal 32 residues, 1-32 (MALRPNDVTLRLTPPLAAAARRNRRAAAGGVR), are a transit peptide targeting the chloroplast. Positions 138, 176, 179, 229, 262, and 265 each coordinate Fe cation.

The protein belongs to the fatty acid desaturase type 2 family. As to quaternary structure, homodimer. It depends on Fe(2+) as a cofactor.

Its subcellular location is the plastid. The protein resides in the chloroplast. The enzyme catalyses octadecanoyl-[ACP] + 2 reduced [2Fe-2S]-[ferredoxin] + O2 + 2 H(+) = (9Z)-octadecenoyl-[ACP] + 2 oxidized [2Fe-2S]-[ferredoxin] + 2 H2O. Its pathway is lipid metabolism; fatty acid metabolism. Its function is as follows. Converts stearoyl-ACP to oleoyl-ACP by introduction of a cis double bond between carbons 9 and 10 of the acyl chain. Required for the repression of the salicylic acid (SA) signaling pathway. The protein is Stearoyl-[acyl-carrier-protein] 9-desaturase 2, chloroplastic (SSI2) of Oryza sativa subsp. indica (Rice).